The following is a 519-amino-acid chain: Cilia- and flagella-associated protein 157 (519 aa).

Basic residues predominate over residues 1–11 (MPPKKKGKRGP). Positions 1 to 25 (MPPKKKGKRGPSAKTKEKETVRVAS) are disordered. Coiled coils occupy residues 28-185 (VTEQ…EKKV) and 241-356 (IELI…QRTL).

This sequence belongs to the CFAP157 family.

It localises to the cytoplasm. The protein localises to the cytoskeleton. It is found in the cilium basal body. Functionally, specifically required during spermatogenesis for flagellum morphogenesis and sperm motility. The protein is Cilia- and flagella-associated protein 157 of Xenopus tropicalis (Western clawed frog).